The sequence spans 247 residues: Adenosylcobinamide-GDP ribazoletransferase (247 aa).

Helical transmembrane passes span 34-54 (IVMFPLIGAILGGLSGLIFIL), 59-79 (CGIPLAALFCILALALLTGGF), 113-133 (GGLALIFVLLAKILVVSELAL), 138-158 (VLAALAAACAAGRGSAALLMY), and 194-214 (VLLPGMQGLAAIVITLAAIFI).

This sequence belongs to the CobS family. Mg(2+) serves as cofactor.

The protein resides in the cell inner membrane. It catalyses the reaction alpha-ribazole + adenosylcob(III)inamide-GDP = adenosylcob(III)alamin + GMP + H(+). The catalysed reaction is alpha-ribazole 5'-phosphate + adenosylcob(III)inamide-GDP = adenosylcob(III)alamin 5'-phosphate + GMP + H(+). The protein operates within cofactor biosynthesis; adenosylcobalamin biosynthesis; adenosylcobalamin from cob(II)yrinate a,c-diamide: step 7/7. Its function is as follows. Joins adenosylcobinamide-GDP and alpha-ribazole to generate adenosylcobalamin (Ado-cobalamin). Also synthesizes adenosylcobalamin 5'-phosphate from adenosylcobinamide-GDP and alpha-ribazole 5'-phosphate. This chain is Adenosylcobinamide-GDP ribazoletransferase, found in Salmonella arizonae (strain ATCC BAA-731 / CDC346-86 / RSK2980).